The following is a 163-amino-acid chain: Phosphopantetheine adenylyltransferase (163 aa).

Position 9 (threonine 9) interacts with substrate. Residues 9–10 (TF) and histidine 17 contribute to the ATP site. Substrate-binding residues include lysine 41, leucine 76, and arginine 90. Residues 91–93 (GLR), glutamate 101, and 126–132 (HQAIASR) contribute to the ATP site.

This sequence belongs to the bacterial CoaD family. In terms of assembly, homohexamer. Mg(2+) is required as a cofactor.

It is found in the cytoplasm. The enzyme catalyses (R)-4'-phosphopantetheine + ATP + H(+) = 3'-dephospho-CoA + diphosphate. Its pathway is cofactor biosynthesis; coenzyme A biosynthesis; CoA from (R)-pantothenate: step 4/5. In terms of biological role, reversibly transfers an adenylyl group from ATP to 4'-phosphopantetheine, yielding dephospho-CoA (dPCoA) and pyrophosphate. The polypeptide is Phosphopantetheine adenylyltransferase (Caulobacter vibrioides (strain ATCC 19089 / CIP 103742 / CB 15) (Caulobacter crescentus)).